The chain runs to 365 residues: Phosphatidylcholine:ceramide cholinephosphotransferase 2 (365 aa).

Residues 1–14 (MDIIETAKLEEHLE) are compositionally biased toward basic and acidic residues. Residues 1–52 (MDIIETAKLEEHLENQPSDPTNTYTRPTEPVEEENKNGNGKPKSLSSGLRKG) form a disordered region. Positions 15–26 (NQPSDPTNTYTR) are enriched in polar residues. A run of 5 helical transmembrane segments spans residues 80–100 (GIAF…ITVV), 128–148 (FSVS…QWLF), 159–179 (FCFI…VTTL), 218–240 (HILC…YLFI), and 248–268 (FWWY…CILV). H229 is an active-site residue. Catalysis depends on residues H272 and D276. A helical membrane pass occupies residues 273–290 (YTVDVIIAYYITTRLFWW). Topologically, residues 291-365 (YHSMANEKNL…KIGEDNEKST (75 aa)) are cytoplasmic. 4 S-palmitoyl cysteine lipidation sites follow: C331, C332, C343, and C348.

It belongs to the sphingomyelin synthase family. Post-translationally, palmitoylated on Cys-331, Cys-332, Cys-343 and Cys-348; which plays an important role in plasma membrane localization.

The protein localises to the cell membrane. It localises to the golgi apparatus membrane. The enzyme catalyses an N-acylsphing-4-enine + a 1,2-diacyl-sn-glycero-3-phosphocholine = a sphingomyelin + a 1,2-diacyl-sn-glycerol. The catalysed reaction is an N-acylsphinganine + a 1,2-diacyl-sn-glycero-3-phosphocholine = an N-acylsphinganine-1-phosphocholine + a 1,2-diacyl-sn-glycerol. It carries out the reaction an N-acyl-(4R)-4-hydroxysphinganine + a 1,2-diacyl-sn-glycero-3-phosphocholine = an N-acyl-(4R)-4-hydroxysphinganine-phosphocholine + a 1,2-diacyl-sn-glycerol. It catalyses the reaction an N-acylsphing-4-enine + a 1,2-diacyl-sn-glycero-3-phosphoethanolamine = an N-acylsphing-4-enine 1-phosphoethanolamine + a 1,2-diacyl-sn-glycerol. The enzyme catalyses an N-acylsphinganine + a 1,2-diacyl-sn-glycero-3-phosphoethanolamine = an N-acylsphinganine-1-phosphoethanolamine + a 1,2-diacyl-sn-glycerol. The catalysed reaction is an N-acyl-(4R)-4-hydroxysphinganine + a 1,2-diacyl-sn-glycero-3-phosphoethanolamine = an N-acyl-(4R)-4-hydroxysphinganine-1-phosphoethanolamine + a 1,2-diacyl-sn-glycerol. It carries out the reaction 1,2-dihexadecanoyl-sn-glycero-3-phosphocholine + an N-acylsphing-4-enine = 1,2-dihexadecanoyl-sn-glycerol + a sphingomyelin. It catalyses the reaction 1-(9Z-octadecenoyl)-2-acyl-sn-3-glycerol + a sphingomyelin = a 1-(9Z-octadecenoyl)-2-acyl-sn-glycero-3-phosphocholine + an N-acylsphing-4-enine. The enzyme catalyses N-hexadecanoylsphinganine + a 1,2-diacyl-sn-glycero-3-phosphocholine = N-hexadecanoyl-sphinganine-1-phosphocholine + a 1,2-diacyl-sn-glycerol. The catalysed reaction is N-hexadecanoyl-(4R)-hydroxysphinganine + a 1,2-diacyl-sn-glycero-3-phosphocholine = N-hexadecanoyl-(4R)-hydroxysphinganine-phosphocholine + a 1,2-diacyl-sn-glycerol. It carries out the reaction N-hexadecanoylsphinganine + a 1,2-diacyl-sn-glycero-3-phosphoethanolamine = N-hexadecanoyl-sphinganine-1-phosphoethanolamine + a 1,2-diacyl-sn-glycerol. It catalyses the reaction N-hexadecanoyl-(4R)-hydroxysphinganine + a 1,2-diacyl-sn-glycero-3-phosphoethanolamine = N-hexadecanoyl-(4R)-hydroxysphinganine-1-phosphoethanolamine + a 1,2-diacyl-sn-glycerol. The protein operates within sphingolipid metabolism. In terms of biological role, sphingomyelin synthase that primarily contributes to sphingomyelin synthesis and homeostasis at the plasma membrane. Catalyzes the reversible transfer of phosphocholine moiety in sphingomyelin biosynthesis: in the forward reaction transfers phosphocholine head group of phosphatidylcholine (PC) on to ceramide (CER) to form ceramide phosphocholine (sphingomyelin, SM) and diacylglycerol (DAG) as by-product, and in the reverse reaction transfers phosphocholine from SM to DAG to form PC and CER. The direction of the reaction appears to depend on the levels of CER and DAG in the plasma membrane. Does not use free phosphorylcholine or CDP-choline as donors. Can also transfer phosphoethanolamine head group of phosphatidylethanolamine (PE) on to ceramide (CER) to form ceramide phosphoethanolamine (CPE). Regulates receptor-mediated signal transduction via mitogenic DAG and proapoptotic CER, as well as via SM, a structural component of membrane rafts that serve as platforms for signal transduction and protein sorting. To a lesser extent, plays a role in secretory transport via regulation of DAG pool at the Golgi apparatus and its downstream effects on PRKD1. Required for normal bone matrix mineralization. The protein is Phosphatidylcholine:ceramide cholinephosphotransferase 2 (SGMS2) of Macaca fascicularis (Crab-eating macaque).